The chain runs to 95 residues: Cell division protein FtsB (95 aa).

At 1-3 the chain is on the cytoplasmic side; it reads MKW. The chain crosses the membrane as a helical span at residues 4 to 21; that stretch reads VTGLLVVLLLGLQYKLWI. The Periplasmic segment spans residues 22 to 95; that stretch reads GEGSVAEVWQ…QVVGRPGETP (74 aa). Residues 26–73 are a coiled coil; sequence VAEVWQLRQTLEAQRAENEELRYRNAALDAEVTDLKTGLDAIEERARR.

Belongs to the FtsB family. As to quaternary structure, part of a complex composed of FtsB, FtsL and FtsQ.

Its subcellular location is the cell inner membrane. In terms of biological role, essential cell division protein. May link together the upstream cell division proteins, which are predominantly cytoplasmic, with the downstream cell division proteins, which are predominantly periplasmic. In Thioalkalivibrio sulfidiphilus (strain HL-EbGR7), this protein is Cell division protein FtsB.